Here is an 83-residue protein sequence, read N- to C-terminus: Putative defensin-like protein 110 (83 aa).

A signal peptide spans 1 to 24 (MAITKKNLIAFVFTILFVISYVHC). 4 disulfide bridges follow: cysteine 43–cysteine 81, cysteine 49–cysteine 73, cysteine 59–cysteine 79, and cysteine 63–cysteine 80.

It belongs to the DEFL family.

The protein resides in the secreted. In Arabidopsis thaliana (Mouse-ear cress), this protein is Putative defensin-like protein 110.